The chain runs to 520 residues: GMP synthase [glutamine-hydrolyzing] (520 aa).

The 194-residue stretch at 9–202 (KILILDFGSQ…VRAICGCTGH (194 aa)) folds into the Glutamine amidotransferase type-1 domain. The Nucleophile role is filled by cysteine 86. Residues histidine 176 and glutamate 178 contribute to the active site. The 193-residue stretch at 203-395 (WTPGQIIEDA…LGLPHQMVWR (193 aa)) folds into the GMPS ATP-PPase domain. ATP is bound at residue 230–236 (SGGVDSS).

Homodimer.

The catalysed reaction is XMP + L-glutamine + ATP + H2O = GMP + L-glutamate + AMP + diphosphate + 2 H(+). The protein operates within purine metabolism; GMP biosynthesis; GMP from XMP (L-Gln route): step 1/1. Catalyzes the synthesis of GMP from XMP. The polypeptide is GMP synthase [glutamine-hydrolyzing] (Pelobacter propionicus (strain DSM 2379 / NBRC 103807 / OttBd1)).